We begin with the raw amino-acid sequence, 211 residues long: Thiamine-phosphate synthase (211 aa).

Residues 37-41 (QLRIK) and Asn-69 each bind 4-amino-2-methyl-5-(diphosphooxymethyl)pyrimidine. Residues Asp-70 and Asp-89 each coordinate Mg(2+). Ser-108 provides a ligand contact to 4-amino-2-methyl-5-(diphosphooxymethyl)pyrimidine. 134–136 (TQT) contacts 2-[(2R,5Z)-2-carboxy-4-methylthiazol-5(2H)-ylidene]ethyl phosphate. Lys-137 is a binding site for 4-amino-2-methyl-5-(diphosphooxymethyl)pyrimidine. 2-[(2R,5Z)-2-carboxy-4-methylthiazol-5(2H)-ylidene]ethyl phosphate contacts are provided by residues Gly-166 and 186-187 (VS).

The protein belongs to the thiamine-phosphate synthase family. Requires Mg(2+) as cofactor.

It carries out the reaction 2-[(2R,5Z)-2-carboxy-4-methylthiazol-5(2H)-ylidene]ethyl phosphate + 4-amino-2-methyl-5-(diphosphooxymethyl)pyrimidine + 2 H(+) = thiamine phosphate + CO2 + diphosphate. The enzyme catalyses 2-(2-carboxy-4-methylthiazol-5-yl)ethyl phosphate + 4-amino-2-methyl-5-(diphosphooxymethyl)pyrimidine + 2 H(+) = thiamine phosphate + CO2 + diphosphate. It catalyses the reaction 4-methyl-5-(2-phosphooxyethyl)-thiazole + 4-amino-2-methyl-5-(diphosphooxymethyl)pyrimidine + H(+) = thiamine phosphate + diphosphate. It functions in the pathway cofactor biosynthesis; thiamine diphosphate biosynthesis; thiamine phosphate from 4-amino-2-methyl-5-diphosphomethylpyrimidine and 4-methyl-5-(2-phosphoethyl)-thiazole: step 1/1. In terms of biological role, condenses 4-methyl-5-(beta-hydroxyethyl)thiazole monophosphate (THZ-P) and 2-methyl-4-amino-5-hydroxymethyl pyrimidine pyrophosphate (HMP-PP) to form thiamine monophosphate (TMP). In Shigella dysenteriae serotype 1 (strain Sd197), this protein is Thiamine-phosphate synthase.